A 159-amino-acid chain; its full sequence is Large ribosomal subunit protein uL11 (159 aa).

Belongs to the universal ribosomal protein uL11 family. In terms of assembly, part of the ribosomal stalk of the 50S ribosomal subunit. Interacts with L10 and the large rRNA to form the base of the stalk. L10 forms an elongated spine to which L12 dimers bind in a sequential fashion forming a multimeric L10(L12)X complex.

In terms of biological role, forms part of the ribosomal stalk which helps the ribosome interact with GTP-bound translation factors. This Methanothrix thermoacetophila (strain DSM 6194 / JCM 14653 / NBRC 101360 / PT) (Methanosaeta thermophila) protein is Large ribosomal subunit protein uL11.